The following is a 492-amino-acid chain: Probable Xaa-Pro aminopeptidase AO090005001240 (492 aa).

Mn(2+) is bound by residues Asp-272, Asp-283, Glu-420, and Glu-459.

This sequence belongs to the peptidase M24B family. The cofactor is Mn(2+).

The enzyme catalyses Release of any N-terminal amino acid, including proline, that is linked to proline, even from a dipeptide or tripeptide.. In terms of biological role, catalyzes the removal of a penultimate prolyl residue from the N-termini of peptides. The protein is Probable Xaa-Pro aminopeptidase AO090005001240 of Aspergillus oryzae (strain ATCC 42149 / RIB 40) (Yellow koji mold).